The chain runs to 918 residues: MELTGLTRAAAAATVTPPAPRRGWGELRFAPLLPGERHGRRKVVVAAISEEVPRLAASPSSGIKGGGAGERRPAPEKVALRAALTVRRKQKEDIKEAVAGHLDALWDMVGRNVVLELISTKIHPRTKKPMQSGRVSIKDWCQKRGAKGDHVVYTAEFTVDADFGEPGAIAVANRHNREFFLESIVVEGGGLPCGPVHFACNSWVQSTRELPTKRVFFSNKPYLPSETPPGLRELREKELKDLRGDGTGVRKLSDRIYDYATYNDLGNPDKGKEFIRPILGGEKIPYPRRCRTGRPPTDTNMLAESRVEKPHPIYVPRDEAFEELKQGAFSSGRLRAVLHTLIPSLIASISAETHNFQGFHHIDNLYKEGLRLKLGLQEHLFQKIPLVQKIQESSEGMLRYDTPSILSKDKFAWLRDDEFARQAVAGINPVNIERLQVFPPVSKLDPAIYGPPESSITETHIAGHLNGLTVQQAMDEAKLFIVDYHDAYLPFLDRINAIDGRKAYATRTIFFLTEAGTLKPIAIELSLPPAKPGEPRPSKVLTPPYDATSNWLWMLAKAHVSSNDAGVHQLVNHWLRTHATMEPFILAAHRHMSAMHPIFKLLHPHMRYTLEINALARQSLINADGVIESCFTPGPVSGEISAAYYRNHWRFDLEGLPSDLIRRGVAVEDATQPHGVRLLIEDYPYANDGLLLWSAIRSWVESYVQLYYPDAGTVQCDLELQGWYHESIHVGHGDLRHAPWWPPLSTPVDLASILTTLVWLASAQHAALNFGQYPLGGYVPNRPPLIRRLLPDLERDAAEYAAFLADPHRFFLNAMPGVLEATKFMAVVDTLSTHSPDEEYLGEGRDEGGVPWTADEAAVAAHGMFAADVRRAEETIERRNADHGRKNRCGAGVLPYELLAPSSPPGVTCRGVPNSISI.

The interval 56-76 (AASPSSGIKGGGAGERRPAPE) is disordered. Residues 90-218 (QKEDIKEAVA…ELPTKRVFFS (129 aa)) form the PLAT domain. One can recognise a Lipoxygenase domain in the interval 221-918 (PYLPSETPPG…CRGVPNSISI (698 aa)). The Fe cation site is built by H573, H578, H765, N769, and I918.

Belongs to the lipoxygenase family. Fe cation serves as cofactor.

It catalyses the reaction (9Z,12Z)-octadecadienoate + O2 = (13S)-hydroperoxy-(9Z,11E)-octadecadienoate. The enzyme catalyses (9Z,12Z,15Z)-octadecatrienoate + O2 = (13S)-hydroperoxy-(9Z,11E,15Z)-octadecatrienoate. Its pathway is lipid metabolism; oxylipin biosynthesis. In terms of biological role, plant lipoxygenase may be involved in a number of diverse aspects of plant physiology including growth and development, pest resistance, and senescence or responses to wounding. Catalyzes the hydroperoxidation of lipids containing a cis,cis-1,4-pentadiene structure. The protein is Probable lipoxygenase 6 of Oryza sativa subsp. japonica (Rice).